The sequence spans 217 residues: Large ribosomal subunit protein uL4 (217 aa).

The tract at residues 46 to 102 (KRQGTHSAKTRAEVSGGGRKPFRQKGTGRARQGSIRAPHFTGGGISHGPKPRDYSQR) is disordered.

The protein belongs to the universal ribosomal protein uL4 family. In terms of assembly, part of the 50S ribosomal subunit.

Its function is as follows. One of the primary rRNA binding proteins, this protein initially binds near the 5'-end of the 23S rRNA. It is important during the early stages of 50S assembly. It makes multiple contacts with different domains of the 23S rRNA in the assembled 50S subunit and ribosome. Functionally, forms part of the polypeptide exit tunnel. The polypeptide is Large ribosomal subunit protein uL4 (Corynebacterium diphtheriae (strain ATCC 700971 / NCTC 13129 / Biotype gravis)).